We begin with the raw amino-acid sequence, 1357 residues long: RNA2 polyprotein (1357 aa).

This sequence belongs to the nepoviruses RNA2 polyprotein family. In terms of processing, specific enzymatic cleavages in vivo by the P1 encoded 3C-like protease yield mature proteins.

It localises to the host cell junction. It is found in the host plasmodesma. The protein localises to the host cytoplasm. The protein resides in the host nucleus. Its subcellular location is the virion. Its function is as follows. Implicated in RNA2 replication. Could also be required for nematode transmission of the virus. In terms of biological role, transports viral genome to neighboring plant cells directly through plasmosdesmata, without any budding. The movement protein allows efficient cell to cell propagation, by bypassing the host cell wall barrier. Acts by forming a tubular structure at the host plasmodesmata, enlarging it enough to allow free passage of virion capsids. The sequence is that of RNA2 polyprotein from Beet ringspot virus (BRSV).